A 301-amino-acid polypeptide reads, in one-letter code: Acetylglutamate kinase (301 aa).

Substrate contacts are provided by residues 72 to 73, Arg94, and Asn199; that span reads GG.

Belongs to the acetylglutamate kinase family. ArgB subfamily.

It is found in the cytoplasm. The catalysed reaction is N-acetyl-L-glutamate + ATP = N-acetyl-L-glutamyl 5-phosphate + ADP. Its pathway is amino-acid biosynthesis; L-arginine biosynthesis; N(2)-acetyl-L-ornithine from L-glutamate: step 2/4. In terms of biological role, catalyzes the ATP-dependent phosphorylation of N-acetyl-L-glutamate. The chain is Acetylglutamate kinase from Bartonella bacilliformis (strain ATCC 35685 / KC583 / Herrer 020/F12,63).